We begin with the raw amino-acid sequence, 196 residues long: DnaA initiator-associating protein DiaA (196 aa).

Positions leucine 34–aspartate 196 constitute an SIS domain.

This sequence belongs to the SIS family. DiaA subfamily. In terms of assembly, homotetramer; dimer of dimers.

Required for the timely initiation of chromosomal replication via direct interactions with the DnaA initiator protein. In Enterobacter sp. (strain 638), this protein is DnaA initiator-associating protein DiaA.